The following is a 435-amino-acid chain: tRNA-2-methylthio-N(6)-dimethylallyladenosine synthase (435 aa).

One can recognise an MTTase N-terminal domain in the interval 5 to 120; sequence KKLFIETLGC…ISEVLHKERA (116 aa). [4Fe-4S] cluster is bound by residues C14, C51, C83, C152, C156, and C159. The Radical SAM core domain occupies 138-372; sequence RTSPYKAYIN…NLAVNILDEK (235 aa). Positions 374 to 435 constitute a TRAM domain; sequence KTHLGKIYRV…RTILSGEIVG (62 aa).

It belongs to the methylthiotransferase family. MiaB subfamily. Monomer. It depends on [4Fe-4S] cluster as a cofactor.

It is found in the cytoplasm. It carries out the reaction N(6)-dimethylallyladenosine(37) in tRNA + (sulfur carrier)-SH + AH2 + 2 S-adenosyl-L-methionine = 2-methylsulfanyl-N(6)-dimethylallyladenosine(37) in tRNA + (sulfur carrier)-H + 5'-deoxyadenosine + L-methionine + A + S-adenosyl-L-homocysteine + 2 H(+). Catalyzes the methylthiolation of N6-(dimethylallyl)adenosine (i(6)A), leading to the formation of 2-methylthio-N6-(dimethylallyl)adenosine (ms(2)i(6)A) at position 37 in tRNAs that read codons beginning with uridine. The polypeptide is tRNA-2-methylthio-N(6)-dimethylallyladenosine synthase (Sulfurimonas denitrificans (strain ATCC 33889 / DSM 1251) (Thiomicrospira denitrificans (strain ATCC 33889 / DSM 1251))).